Here is a 330-residue protein sequence, read N- to C-terminus: Phosphate acyltransferase (330 aa).

Belongs to the PlsX family. In terms of assembly, homodimer. Probably interacts with PlsY.

The protein resides in the cytoplasm. It carries out the reaction a fatty acyl-[ACP] + phosphate = an acyl phosphate + holo-[ACP]. Its pathway is lipid metabolism; phospholipid metabolism. Functionally, catalyzes the reversible formation of acyl-phosphate (acyl-PO(4)) from acyl-[acyl-carrier-protein] (acyl-ACP). This enzyme utilizes acyl-ACP as fatty acyl donor, but not acyl-CoA. This is Phosphate acyltransferase from Streptococcus pneumoniae serotype 2 (strain D39 / NCTC 7466).